The sequence spans 468 residues: 6-phospho-beta-galactosidase 2 (468 aa).

D-galactose 6-phosphate contacts are provided by Gln-19, His-116, Asn-159, Glu-160, and Asn-297. The active-site Proton donor is the Glu-160. Glu-375 functions as the Nucleophile in the catalytic mechanism. D-galactose 6-phosphate is bound by residues Ser-428, Trp-429, Lys-435, and Tyr-437.

Belongs to the glycosyl hydrolase 1 family.

It carries out the reaction a 6-phospho-beta-D-galactoside + H2O = D-galactose 6-phosphate + an alcohol. It participates in carbohydrate metabolism; lactose degradation; D-galactose 6-phosphate and beta-D-glucose from lactose 6-phosphate: step 1/1. In Streptococcus pneumoniae (strain ATCC BAA-255 / R6), this protein is 6-phospho-beta-galactosidase 2.